The sequence spans 295 residues: Protease HtpX (295 aa).

2 helical membrane-spanning segments follow: residues Ile-4–Leu-24 and Gly-34–Ser-54. His-139 is a binding site for Zn(2+). Glu-140 is an active-site residue. Zn(2+) is bound at residue His-143. Helical transmembrane passes span Gly-147–Ser-167 and Ile-194–Ile-214. Residue Glu-223 coordinates Zn(2+).

The protein belongs to the peptidase M48B family. Requires Zn(2+) as cofactor.

The protein localises to the cell inner membrane. This Photorhabdus laumondii subsp. laumondii (strain DSM 15139 / CIP 105565 / TT01) (Photorhabdus luminescens subsp. laumondii) protein is Protease HtpX.